Reading from the N-terminus, the 50-residue chain is Insulin (50 aa).

3 disulfides stabilise this stretch: cysteine 7–cysteine 36, cysteine 19–cysteine 49, and cysteine 35–cysteine 40.

The protein belongs to the insulin family. In terms of assembly, heterodimer of a B chain and an A chain linked by two disulfide bonds.

It is found in the secreted. Its function is as follows. Insulin decreases blood glucose concentration. It increases cell permeability to monosaccharides, amino acids and fatty acids. It accelerates glycolysis, the pentose phosphate cycle, and glycogen synthesis in liver. The polypeptide is Insulin (ins) (Katsuwonus pelamis (Skipjack tuna)).